The primary structure comprises 309 residues: tRNA pseudouridine synthase B (309 aa).

Asp-45 (nucleophile) is an active-site residue.

Belongs to the pseudouridine synthase TruB family. Type 1 subfamily.

The catalysed reaction is uridine(55) in tRNA = pseudouridine(55) in tRNA. Its function is as follows. Responsible for synthesis of pseudouridine from uracil-55 in the psi GC loop of transfer RNAs. The polypeptide is tRNA pseudouridine synthase B (Oleidesulfovibrio alaskensis (strain ATCC BAA-1058 / DSM 17464 / G20) (Desulfovibrio alaskensis)).